A 152-amino-acid polypeptide reads, in one-letter code: UPF0225 protein YchJ (152 aa).

It belongs to the UPF0225 family.

In Escherichia coli O127:H6 (strain E2348/69 / EPEC), this protein is UPF0225 protein YchJ.